The following is a 541-amino-acid chain: Chaperonin GroEL 1 (541 aa).

Residues threonine 29 to proline 32, aspartate 86 to threonine 90, glycine 413, asparagine 477 to alanine 479, and aspartate 493 contribute to the ATP site.

This sequence belongs to the chaperonin (HSP60) family. As to quaternary structure, forms a cylinder of 14 subunits composed of two heptameric rings stacked back-to-back. Interacts with the co-chaperonin GroES.

The protein localises to the cytoplasm. It catalyses the reaction ATP + H2O + a folded polypeptide = ADP + phosphate + an unfolded polypeptide.. Together with its co-chaperonin GroES, plays an essential role in assisting protein folding. The GroEL-GroES system forms a nano-cage that allows encapsulation of the non-native substrate proteins and provides a physical environment optimized to promote and accelerate protein folding. The protein is Chaperonin GroEL 1 of Paenarthrobacter aurescens (strain TC1).